A 1118-amino-acid polypeptide reads, in one-letter code: Sodium-driven chloride bicarbonate exchanger (1118 aa).

Disordered regions lie at residues 1–23 (MEIK…EEAV), 58–96 (GRKS…DTPS), 245–312 (KQSE…PPHQ), and 457–476 (NGTA…GPEL). At 1–509 (MEIKDQGAQM…DFRDAFSLQC (509 aa)) the chain is on the cytoplasmic side. Residues 59–76 (RKSHRRHRHRGHKHRKRD) show a composition bias toward basic residues. The span at 77–90 (RERDSGLEDGRESP) shows a compositional bias: basic and acidic residues. Ser89 carries the post-translational modification Phosphoserine. A Phosphothreonine modification is found at Thr94. Over residues 248–264 (EPNSMDKNAGQVVSPQS) the composition is skewed to polar residues. The residue at position 276 (Ser276) is a Phosphoserine. The chain crosses the membrane as a helical span at residues 510–530 (LASFLFLYCACMSPVITFGGL). Residues 531–538 (LGEATEGR) lie on the Extracellular side of the membrane. A helical membrane pass occupies residues 539–559 (ISAIESLFGASMTGIAYSLFG). Topologically, residues 560–562 (GQP) are cytoplasmic. Residues 563-583 (LTILGSTGPVLVFEKILFKFC) form a helical membrane-spanning segment. Topologically, residues 584–596 (KEYGLSYLSLRAS) are extracellular. The helical transmembrane segment at 597–617 (IGLWTATLCIILVATDASSLV) threads the bilayer. The Cytoplasmic segment spans residues 618 to 626 (CYITRFTEE). The chain crosses the membrane as a helical span at residues 627–647 (AFASLICIIFIYEALEKLFEL). Residues 648–720 (SEAYPINMHN…VGRACGHDHP (73 aa)) lie on the Extracellular side of the membrane. Residues Asn674, Asn677, Asn687, and Asn697 are each glycosylated (N-linked (GlcNAc...) asparagine). A helical transmembrane segment spans residues 721–741 (YVPDVLFWSVILFFSTVTLSA). Over 742-762 (TLKQFKTSRYFPTKVRSIVSD) the chain is Cytoplasmic. Residues 763-783 (FAVFLTILCMVLIDYAIGIPS) form a helical membrane-spanning segment. Topologically, residues 784–809 (PKLQVPSVFKPTRDDRGWFVTPLGPN) are extracellular. A helical transmembrane segment spans residues 810 to 830 (PWWTVIAAIIPALLCTILIFM). The Cytoplasmic portion of the chain corresponds to 831–855 (DQQITAVIINRKEHKLKKGCGYHLD). Residues 856–876 (LLMVAVMLGVCSIMGLPWFVA) form a helical membrane-spanning segment. The Extracellular segment spans residues 877–912 (ATVLSITHVNSLKLESECSAPGEQPKFLGIREQRVT). A helical transmembrane segment spans residues 913 to 933 (GLMIFILMGSSVFMTSILKFI). The Cytoplasmic segment spans residues 934 to 935 (PM). A helical transmembrane segment spans residues 936–956 (PVLYGVFLYMGASSLKGIQFF). Residues 957 to 998 (DRIKLFWMPAKHQPDFIYLRHVPLRKVHLFTIIQMSCLGLLW) are Extracellular-facing. The chain crosses the membrane as a helical span at residues 999-1019 (IIKVSRAAIVFPMMVLALVFV). The Cytoplasmic portion of the chain corresponds to 1020-1118 (RKLMDLLFTK…SSFPSKSSPS (99 aa)). A phosphoserine mark is found at Ser1057 and Ser1085.

It belongs to the anion exchanger (TC 2.A.31) family. Predominantly expressed in the brain.

The protein resides in the basolateral cell membrane. It is found in the apical cell membrane. It localises to the cell projection. The protein localises to the dendrite. Its subcellular location is the axon. The protein resides in the perikaryon. It is found in the presynapse. It localises to the postsynapse. It catalyses the reaction 2 hydrogencarbonate(out) + chloride(in) + Na(+)(out) = 2 hydrogencarbonate(in) + chloride(out) + Na(+)(in). Its function is as follows. Sodium/bicarbonate cotransporter which plays an important role in regulating intracellular pH. Has been shown to act as a sodium/bicarbonate cotransporter in exchange for intracellular chloride. Has also been shown to act as a sodium/biocarbonate cotransporter which does not couple net influx of bicarbonate to net efflux of chloride, with the observed chloride efflux being due to chloride self-exchange. Controls neuronal pH and may contribute to the secretion of cerebrospinal fluid. Acting on presynaptic intracellular pH, it promotes GABA release, reduces the excitability of CA1 pyramidal neurons, and modulates short-term synaptic plasticity. Required in retinal cells to maintain normal pH which is necessary for normal vision. In the kidney, likely to mediate bicarbonate reclamation in the apical membrane of the proximal tubules. The protein is Sodium-driven chloride bicarbonate exchanger of Homo sapiens (Human).